The sequence spans 148 residues: Sporulation inhibitor of replication protein SirA (148 aa).

It belongs to the SirA family. As to quaternary structure, interacts with DnaA. Forms a 1:1 complex with domain I of DnaA.

The protein localises to the cytoplasm. In terms of biological role, inhibits DNA replication initiation during sporulation, preventing overinitiation and thus enforcing diploidy; probably the main regulator of sporulation replication initiation under Spo0A control. During sporulation SirA prevents DnaA association with the replication origin to prevent excessive chromosome replication. Alternatively SirA binds to domain I of DnaA and prevent its interaction with DnaD, preventing DNA replication initiation. Upon ectopic expression during vegetative growth reduces chromosome copy number, leading to elongated cells with that can have a single nucleoid or be anucleate. Ectopic expression during vegetative growth blocks DnaA at oriC while blocking recruitment of DnaD to oriC. Plays a significant role during the onset of sporulation. This chain is Sporulation inhibitor of replication protein SirA, found in Bacillus subtilis (strain 168).